The chain runs to 67 residues: Neurotoxin Cex10 (67 aa).

The region spanning 1–65 is the LCN-type CS-alpha/beta domain; that stretch reads KDGYLVEVTG…TWPLPNKSCG (65 aa). Intrachain disulfides connect Cys-11-Cys-64, Cys-15-Cys-40, Cys-24-Cys-45, and Cys-28-Cys-47. Cys-64 is modified (cysteine amide). Positions 65 to 67 are excised as a propeptide; that stretch reads GKK.

It belongs to the long (4 C-C) scorpion toxin superfamily. Sodium channel inhibitor family. Beta subfamily. In terms of tissue distribution, expressed by the venom gland.

It is found in the secreted. Functionally, beta toxins bind voltage-independently at site-4 of sodium channels (Nav) and shift the voltage of activation toward more negative potentials thereby affecting sodium channel activation and promoting spontaneous and repetitive firing. The polypeptide is Neurotoxin Cex10 (Centruroides exilicauda (Bark scorpion)).